Consider the following 308-residue polypeptide: HPr kinase/phosphorylase (308 aa).

Catalysis depends on residues H138 and K159. ATP is bound at residue 153–160; sequence GESGLGKS. Residue S160 participates in Mg(2+) binding. Residue D177 is the Proton acceptor; for phosphorylation activity. Proton donor; for dephosphorylation activity of the active site. Positions 201–210 are important for the catalytic mechanism of both phosphorylation and dephosphorylation; sequence LEVRGLGLLD. E202 lines the Mg(2+) pocket. R243 is a catalytic residue. The interval 264-269 is important for the catalytic mechanism of dephosphorylation; sequence QVAAGR.

It belongs to the HPrK/P family. As to quaternary structure, homohexamer. It depends on Mg(2+) as a cofactor.

The catalysed reaction is [HPr protein]-L-serine + ATP = [HPr protein]-O-phospho-L-serine + ADP + H(+). It catalyses the reaction [HPr protein]-O-phospho-L-serine + phosphate + H(+) = [HPr protein]-L-serine + diphosphate. In terms of biological role, catalyzes the ATP- as well as the pyrophosphate-dependent phosphorylation of a specific serine residue in HPr, a phosphocarrier protein of the phosphoenolpyruvate-dependent sugar phosphotransferase system (PTS). HprK/P also catalyzes the pyrophosphate-producing, inorganic phosphate-dependent dephosphorylation (phosphorolysis) of seryl-phosphorylated HPr (P-Ser-HPr). In Bordetella pertussis (strain Tohama I / ATCC BAA-589 / NCTC 13251), this protein is HPr kinase/phosphorylase.